A 592-amino-acid polypeptide reads, in one-letter code: Ferric-chelate reductase 1 (592 aa).

The helical transmembrane segment at 2–22 (AAPQITLSVLVIALLTCSVTA) threads the bilayer. One can recognise a Reelin domain in the interval 13–179 (IALLTCSVTA…FTTPKATTQP (167 aa)). N-linked (GlcNAc...) asparagine glycosylation is found at Asn-85, Asn-308, Asn-321, and Asn-353. A DOMON domain is found at 216-331 (EPACVFLSFT…ESYYIFFAEG (116 aa)). One can recognise a Cytochrome b561 domain in the interval 335–534 (DGRIFRHSQQ…IGTEVILEIH (200 aa)). A helical transmembrane segment spans residues 372–392 (AHGALMFVAWMTTVSIGVLVA). Heme b contacts are provided by His-373 and His-414. A run of 5 helical transmembrane segments spans residues 415-435 (RMLMVATSLLTCVAFVLPFVY), 446-466 (HPYLGCTVMTLAVLQPLLATF), 477-499 (VFNWTHWSVGTAARIIAVAAMFL), 515-535 (YAMMGFVVWHIGTEVILEIHA), and 569-589 (VVLAVYICGNVIFLSIFLSAI). His-446 and His-482 together coordinate heme b.

The protein belongs to the FRRS1 family. Heme b serves as cofactor. As to expression, expressed in spleen, liver and kidney with low expression in brain. Localizes in adult brain to the choroid plexus of the fourth, third, and lateral ventricles and to ependymal cells that line the ventricles.

The protein localises to the membrane. In terms of biological role, ferric-chelate reductases reduce Fe(3+) to Fe(2+) before its transport from the endosome to the cytoplasm. This chain is Ferric-chelate reductase 1 (FRRS1), found in Mus musculus (Mouse).